Here is a 438-residue protein sequence, read N- to C-terminus: UDP-N-acetylglucosamine 1-carboxyvinyltransferase 1 (438 aa).

Residue 22 to 23 (KN) coordinates phosphoenolpyruvate. UDP-N-acetyl-alpha-D-glucosamine is bound at residue arginine 95. Cysteine 119 serves as the catalytic Proton donor. The residue at position 119 (cysteine 119) is a 2-(S-cysteinyl)pyruvic acid O-phosphothioketal. Residues 124 to 128 (RPIDL), aspartate 307, and valine 329 contribute to the UDP-N-acetyl-alpha-D-glucosamine site.

Belongs to the EPSP synthase family. MurA subfamily.

It is found in the cytoplasm. It catalyses the reaction phosphoenolpyruvate + UDP-N-acetyl-alpha-D-glucosamine = UDP-N-acetyl-3-O-(1-carboxyvinyl)-alpha-D-glucosamine + phosphate. It participates in cell wall biogenesis; peptidoglycan biosynthesis. Cell wall formation. Adds enolpyruvyl to UDP-N-acetylglucosamine. This is UDP-N-acetylglucosamine 1-carboxyvinyltransferase 1 from Lactiplantibacillus plantarum (strain ATCC BAA-793 / NCIMB 8826 / WCFS1) (Lactobacillus plantarum).